The chain runs to 329 residues: MDNMLTFARQQQRRNVRWLLSLSLLVLLATLLSLCAGEQWIAPGDWLSSRGELFVWQIRLPRTLAVLLVGASLALSGAVMQALFENPLAEPGLLGVSNGAGVGLIAAVLLGQGQLPGWSLGLCAIAGALTITLILLRFARRHLSTSRLLLAGVALGIICSALMTWAIYFSTSFDLRQLMYWMMGGFGGVDWQQSWLMTALIPVLIWICCQSQPMNILALGETPARQLGLPLWLWRNLLVVATGWMVGVSVAMAGAIGFIGLVIPHILRLCGLTDHRVLLPGCALAGAIALLLADVVARLALASAELPIGVVTATLGAPIFIWLLLKSAR.

9 consecutive transmembrane segments (helical) span residues 18–38, 64–84, 91–111, 115–135, 149–169, 191–208, 243–263, 277–297, and 305–325; these read WLLSLSLLVLLATLLSLCAGE, LAVLLVGASLALSGAVMQALF, PGLLGVSNGAGVGLIAAVLLG, LPGWSLGLCAIAGALTITLIL, LLAGVALGIICSALMTWAIYF, WQQSWLMTALIPVLIWIC, GWMVGVSVAMAGAIGFIGLVI, VLLPGCALAGAIALLLADVVA, and ELPIGVVTATLGAPIFIWLLL.

The protein belongs to the binding-protein-dependent transport system permease family. FecCD subfamily. The complex is composed of two ATP-binding proteins (BtuD), two transmembrane proteins (BtuC) and a solute-binding protein (BtuF).

It localises to the cell inner membrane. Part of the ABC transporter complex BtuCDF involved in vitamin B12 import. Involved in the translocation of the substrate across the membrane. The chain is Vitamin B12 import system permease protein BtuC from Salmonella arizonae (strain ATCC BAA-731 / CDC346-86 / RSK2980).